The following is a 351-amino-acid chain: MNLQSPHLTIEMTQEIFYCQEALSLESGESFPEFQLSFTTQGQLNANKDNVIWVLHALTGDANPHEWWSGLIGEDKFFDPSKYFIVCANFLGSCYGSTQPLSNNPNNGKPYYYDFPNITTRDIASALDKLRIHLGLEKINTVIGGSLGGQVGLEWAVSLGEKLENAIIVASNAKASPWIIGFNETQRMAIESDSTWGKTQPEAGKKGLETARAIGMLSYRHPMTFLQNQSETEEKRDDFKISSYLRYQGLKLANRFNAMSYWILSKAMDSHDIGRGRGGTPVALSNIKCKVLSIGVDTDILFTSEESRYISKHVPKGTYREISSIYGHDAFLIEYEQLQYILKSFYLENNG.

The AB hydrolase-1 domain maps to 51-334 (VIWVLHALTG…IYGHDAFLIE (284 aa)). Ser146 serves as the catalytic Nucleophile. Position 212 (Arg212) interacts with substrate. Active-site residues include Asp299 and His328. Asp329 lines the substrate pocket.

It belongs to the AB hydrolase superfamily. MetX family. Homodimer.

It is found in the cytoplasm. The catalysed reaction is L-homoserine + acetyl-CoA = O-acetyl-L-homoserine + CoA. It participates in amino-acid biosynthesis; L-methionine biosynthesis via de novo pathway; O-acetyl-L-homoserine from L-homoserine: step 1/1. Transfers an acetyl group from acetyl-CoA to L-homoserine, forming acetyl-L-homoserine. The sequence is that of Homoserine O-acetyltransferase from Cyclobacterium marinum (strain ATCC 25205 / DSM 745 / LMG 13164 / NCIMB 1802) (Flectobacillus marinus).